A 170-amino-acid chain; its full sequence is NADH-ubiquinone oxidoreductase chain 2 (170 aa).

A run of 4 helical transmembrane segments spans residues 24–44, 67–87, 101–121, and 150–170; these read LLWMTYFLLYSLLSISIIMMF, FLIFLNLLSLGGLPPFLGFLP, LFILTISVCLTLITLYFYLRL, and LILNFISIGGLLMILMFYMIL.

It belongs to the complex I subunit 2 family.

The protein localises to the mitochondrion inner membrane. The catalysed reaction is a ubiquinone + NADH + 5 H(+)(in) = a ubiquinol + NAD(+) + 4 H(+)(out). Core subunit of the mitochondrial membrane respiratory chain NADH dehydrogenase (Complex I) that is believed to belong to the minimal assembly required for catalysis. Complex I functions in the transfer of electrons from NADH to the respiratory chain. The immediate electron acceptor for the enzyme is believed to be ubiquinone. This Anopheles albimanus (New world malaria mosquito) protein is NADH-ubiquinone oxidoreductase chain 2 (ND2).